We begin with the raw amino-acid sequence, 375 residues long: Queuine tRNA-ribosyltransferase (375 aa).

Asp-89 functions as the Proton acceptor in the catalytic mechanism. Residues 89-93 (DSGGF), Asp-143, Gln-187, and Gly-214 each bind substrate. The interval 245 to 251 (GVGKPED) is RNA binding. Catalysis depends on Asp-264, which acts as the Nucleophile. Positions 269–273 (TRNAR) are RNA binding; important for wobble base 34 recognition. The Zn(2+) site is built by Cys-302, Cys-304, Cys-307, and His-333.

It belongs to the queuine tRNA-ribosyltransferase family. In terms of assembly, homodimer. Within each dimer, one monomer is responsible for RNA recognition and catalysis, while the other monomer binds to the replacement base PreQ1. Requires Zn(2+) as cofactor.

It catalyses the reaction 7-aminomethyl-7-carbaguanine + guanosine(34) in tRNA = 7-aminomethyl-7-carbaguanosine(34) in tRNA + guanine. It functions in the pathway tRNA modification; tRNA-queuosine biosynthesis. In terms of biological role, catalyzes the base-exchange of a guanine (G) residue with the queuine precursor 7-aminomethyl-7-deazaguanine (PreQ1) at position 34 (anticodon wobble position) in tRNAs with GU(N) anticodons (tRNA-Asp, -Asn, -His and -Tyr). Catalysis occurs through a double-displacement mechanism. The nucleophile active site attacks the C1' of nucleotide 34 to detach the guanine base from the RNA, forming a covalent enzyme-RNA intermediate. The proton acceptor active site deprotonates the incoming PreQ1, allowing a nucleophilic attack on the C1' of the ribose to form the product. After dissociation, two additional enzymatic reactions on the tRNA convert PreQ1 to queuine (Q), resulting in the hypermodified nucleoside queuosine (7-(((4,5-cis-dihydroxy-2-cyclopenten-1-yl)amino)methyl)-7-deazaguanosine). The polypeptide is Queuine tRNA-ribosyltransferase (Escherichia coli O81 (strain ED1a)).